The chain runs to 364 residues: Histidinol-phosphate aminotransferase 2 (364 aa).

Position 223 is an N6-(pyridoxal phosphate)lysine (Lys-223).

Belongs to the class-II pyridoxal-phosphate-dependent aminotransferase family. Histidinol-phosphate aminotransferase subfamily. As to quaternary structure, homodimer. It depends on pyridoxal 5'-phosphate as a cofactor.

It carries out the reaction L-histidinol phosphate + 2-oxoglutarate = 3-(imidazol-4-yl)-2-oxopropyl phosphate + L-glutamate. It participates in amino-acid biosynthesis; L-histidine biosynthesis; L-histidine from 5-phospho-alpha-D-ribose 1-diphosphate: step 7/9. This Oceanobacillus iheyensis (strain DSM 14371 / CIP 107618 / JCM 11309 / KCTC 3954 / HTE831) protein is Histidinol-phosphate aminotransferase 2 (hisC2).